Consider the following 201-residue polypeptide: Ciliary microtubule inner protein 2C (201 aa).

This sequence belongs to the CIMIP2 family. As to quaternary structure, microtubule inner protein component of sperm flagellar doublet microtubules. Expressed in airway epithelial cells.

It is found in the cytoplasm. It localises to the cytoskeleton. The protein resides in the cilium axoneme. The protein localises to the flagellum axoneme. Functionally, microtubule inner protein (MIP) part of the dynein-decorated doublet microtubules (DMTs) in cilia axoneme, which is required for motile cilia beating. Binds to the intra-tubulin interfaces. The polypeptide is Ciliary microtubule inner protein 2C (Homo sapiens (Human)).